Reading from the N-terminus, the 317-residue chain is Transaldolase 1 (317 aa).

K132 functions as the Schiff-base intermediate with substrate in the catalytic mechanism.

The protein belongs to the transaldolase family. Type 1 subfamily. Homodimer.

Its subcellular location is the cytoplasm. It carries out the reaction D-sedoheptulose 7-phosphate + D-glyceraldehyde 3-phosphate = D-erythrose 4-phosphate + beta-D-fructose 6-phosphate. Its pathway is carbohydrate degradation; pentose phosphate pathway; D-glyceraldehyde 3-phosphate and beta-D-fructose 6-phosphate from D-ribose 5-phosphate and D-xylulose 5-phosphate (non-oxidative stage): step 2/3. Transaldolase is important for the balance of metabolites in the pentose-phosphate pathway. This Salmonella paratyphi A (strain ATCC 9150 / SARB42) protein is Transaldolase 1.